A 398-amino-acid polypeptide reads, in one-letter code: Ubiquitin-like modifier-activating enzyme 5 (398 aa).

ATP-binding residues include G79, D100, K123, N146, and N180. Zn(2+) is bound by residues C222 and C225. C246 serves as the catalytic Glycyl thioester intermediate. Zn(2+) is bound by residues C299 and C304. Residues V330–V342 carry the UFM1-interacting sequence (UIS) motif. Residues S343–K373 form a linker region. Positions E383–I398 match the UFC1-binding sequence (UFC) motif.

It belongs to the ubiquitin-activating E1 family. UBA5 subfamily. As to quaternary structure, homodimer; homodimerization is required for ufm1 activation. Interacts (via UIS motif) with ufm1; binds ufm1 via a trans-binding mechanism in which ufm1 interacts with distinct sites in both subunits of the uba5 homodimer. Interacts (via C-terminus) with ufc1.

Its subcellular location is the cytoplasm. It localises to the nucleus. The protein resides in the endoplasmic reticulum membrane. The protein localises to the golgi apparatus. Its function is as follows. E1-like enzyme which specifically catalyzes the first step in ufmylation. Activates ufm1 by first adenylating its C-terminal glycine residue with ATP, and thereafter linking this residue to the side chain of a cysteine residue in E1, yielding a ufm1-E1 thioester and free AMP. Activates ufm1 via a trans-binding mechanism, in which ufm1 interacts with distinct sites in both subunits of the uba5 homodimer. Trans-binding also promotes stabilization of the uba5 homodimer, and enhances ATP-binding. Transfer of ufm1 from uba5 to the E2-like enzyme UFC1 also takes place using a trans mechanism. Ufmylation plays a key role in various processes, such as ribosome recycling, response to DNA damage, interferon response or reticulophagy (also called ER-phagy). This is Ubiquitin-like modifier-activating enzyme 5 from Danio rerio (Zebrafish).